The chain runs to 264 residues: Thymidylate synthase (264 aa).

Position 21 (R21) interacts with dUMP. Residue H51 participates in (6R)-5,10-methylene-5,6,7,8-tetrahydrofolate binding. Residue 126 to 127 (RR) coordinates dUMP. The active-site Nucleophile is C146. DUMP contacts are provided by residues 166-169 (RSCD), N177, and 207-209 (HLY). D169 contributes to the (6R)-5,10-methylene-5,6,7,8-tetrahydrofolate binding site. A263 serves as a coordination point for (6R)-5,10-methylene-5,6,7,8-tetrahydrofolate.

This sequence belongs to the thymidylate synthase family. Bacterial-type ThyA subfamily. As to quaternary structure, homodimer.

The protein resides in the cytoplasm. The enzyme catalyses dUMP + (6R)-5,10-methylene-5,6,7,8-tetrahydrofolate = 7,8-dihydrofolate + dTMP. It participates in pyrimidine metabolism; dTTP biosynthesis. In terms of biological role, catalyzes the reductive methylation of 2'-deoxyuridine-5'-monophosphate (dUMP) to 2'-deoxythymidine-5'-monophosphate (dTMP) while utilizing 5,10-methylenetetrahydrofolate (mTHF) as the methyl donor and reductant in the reaction, yielding dihydrofolate (DHF) as a by-product. This enzymatic reaction provides an intracellular de novo source of dTMP, an essential precursor for DNA biosynthesis. This Shigella dysenteriae serotype 1 (strain Sd197) protein is Thymidylate synthase.